A 174-amino-acid chain; its full sequence is Large ribosomal subunit protein uL10 (174 aa).

This sequence belongs to the universal ribosomal protein uL10 family. As to quaternary structure, part of the ribosomal stalk of the 50S ribosomal subunit. The N-terminus interacts with L11 and the large rRNA to form the base of the stalk. The C-terminus forms an elongated spine to which L12 dimers bind in a sequential fashion forming a multimeric L10(L12)X complex.

Forms part of the ribosomal stalk, playing a central role in the interaction of the ribosome with GTP-bound translation factors. In Bordetella bronchiseptica (strain ATCC BAA-588 / NCTC 13252 / RB50) (Alcaligenes bronchisepticus), this protein is Large ribosomal subunit protein uL10.